A 168-amino-acid chain; its full sequence is MGRIAALTRNPVMIALVAMLAIAGCASKKTPNNAADLGLNGAGAATPGSAQDFTVNIGDRIFFDTDSSSIRADAQTTLARQAQWLNQYKQYAIVVEGHADERGTREYNLALGARRAAAARDFLVSKGVASSRLKTISYGKERPVAVCDDISCWSQNRRAVTTLSGAGS.

Positions 1-24 (MGRIAALTRNPVMIALVAMLAIAG) are cleaved as a signal peptide. Cys-25 carries the N-palmitoyl cysteine lipid modification. The S-diacylglycerol cysteine moiety is linked to residue Cys-25. The 118-residue stretch at 50 to 167 (AQDFTVNIGD…RAVTTLSGAG (118 aa)) folds into the OmpA-like domain.

The protein belongs to the Pal lipoprotein family. In terms of assembly, the Tol-Pal system is composed of five core proteins: the inner membrane proteins TolA, TolQ and TolR, the periplasmic protein TolB and the outer membrane protein Pal. They form a network linking the inner and outer membranes and the peptidoglycan layer.

It localises to the cell outer membrane. Part of the Tol-Pal system, which plays a role in outer membrane invagination during cell division and is important for maintaining outer membrane integrity. In Mesorhizobium japonicum (strain LMG 29417 / CECT 9101 / MAFF 303099) (Mesorhizobium loti (strain MAFF 303099)), this protein is Peptidoglycan-associated lipoprotein.